A 119-amino-acid chain; its full sequence is Large ribosomal subunit protein uL18 (119 aa).

Belongs to the universal ribosomal protein uL18 family. Part of the 50S ribosomal subunit; part of the 5S rRNA/L5/L18/L25 subcomplex. Contacts the 5S and 23S rRNAs.

In terms of biological role, this is one of the proteins that bind and probably mediate the attachment of the 5S RNA into the large ribosomal subunit, where it forms part of the central protuberance. The polypeptide is Large ribosomal subunit protein uL18 (Micrococcus luteus (Micrococcus lysodeikticus)).